The chain runs to 457 residues: Argininosuccinate lyase (457 aa).

This sequence belongs to the lyase 1 family. Argininosuccinate lyase subfamily.

Its subcellular location is the cytoplasm. It carries out the reaction 2-(N(omega)-L-arginino)succinate = fumarate + L-arginine. It functions in the pathway amino-acid biosynthesis; L-arginine biosynthesis; L-arginine from L-ornithine and carbamoyl phosphate: step 3/3. The protein is Argininosuccinate lyase of Staphylococcus carnosus (strain TM300).